The primary structure comprises 142 residues: Transcriptional regulator MraZ (142 aa).

SpoVT-AbrB domains follow at residues 5 to 47 (EYQH…TINE) and 76 to 119 (ACIV…SREK).

It belongs to the MraZ family. Forms oligomers.

The protein localises to the cytoplasm. It is found in the nucleoid. The protein is Transcriptional regulator MraZ of Clostridium botulinum (strain Eklund 17B / Type B).